The primary structure comprises 628 residues: E3 SUMO-protein ligase PIAS3 (628 aa).

Residues 1 to 200 are interaction with CCAR2; sequence MAELGELKHM…QLRFCLCETS (200 aa). The SAP domain occupies 11 to 45; it reads VMSFRVSELQVLLGFAGRNKSGRKHELLAKALHLL. The LXXLL motif motif lies at 19 to 23; the sequence is LQVLL. Glycyl lysine isopeptide (Lys-Gly) (interchain with G-Cter in SUMO2) cross-links involve residues Lys46, Lys56, Lys230, and Lys307. Positions 115–280 constitute a PINIT domain; sequence MHPPLPQPVH…SLSVYLVRQL (166 aa). Residues 312-393 form an SP-RING-type zinc finger; that stretch reads PDSEVATTSL…FMEILSSCSD (82 aa). Zn(2+) is bound by residues Cys343, His345, Cys366, and Cys369. The SUMO1-binding stretch occupies residues 450–460; the sequence is LTIESSSDEED. Glycyl lysine isopeptide (Lys-Gly) (interchain with G-Cter in SUMO2) cross-links involve residues Lys466 and Lys482. Positions 597–617 are disordered; the sequence is VAPGGALREGHGGPLPSGPSL.

The protein belongs to the PIAS family. As to quaternary structure, monomer. Binds SUMO1 and UBE2I. Interacts with BCL11A, HMGA2, IRF1, MITF and NCOA2. Interacts with STAT5; the interaction occurs on stimulation by PRL. Interacts with GFI1; the interaction relieves the inhibitory effect of PIAS3 on STAT3-mediated transcriptional activity. Interacts with AR, PLAG1 and ZFHX3. Interacts with STAT3; the interaction occurs on stimulation by IL6, CNTF or OSM and inhibits the DNA binding activity of STAT3. Interacts with MTA1. Interacts with CCAR2 (via N-terminus). Interacts with TRIM8. Interacts with PRDM1/Blimp-1. Post-translationally, sumoylated. Widely expressed.

The protein localises to the cytoplasm. The protein resides in the nucleus. It is found in the nucleus speckle. The protein operates within protein modification; protein sumoylation. Functions as an E3-type small ubiquitin-like modifier (SUMO) ligase, stabilizing the interaction between UBE2I and the substrate, and as a SUMO-tethering factor. Plays a crucial role as a transcriptional coregulation in various cellular pathways, including the STAT pathway and the steroid hormone signaling pathway. Involved in regulating STAT3 signaling via inhibiting STAT3 DNA-binding and suppressing cell growth. Enhances the sumoylation of MTA1 and may participate in its paralog-selective sumoylation. Sumoylates CCAR2 which promotes its interaction with SIRT1. Diminishes the sumoylation of ZFHX3 by preventing the colocalization of ZFHX3 with SUMO1 in the nucleus. In Homo sapiens (Human), this protein is E3 SUMO-protein ligase PIAS3 (PIAS3).